Reading from the N-terminus, the 333-residue chain is Heat shock transcription factor, X-linked member 3 (333 aa).

A disordered region spans residues 1–66; that stretch reads MASQNTEQEY…QDNSPPEDRN (66 aa). Low complexity predominate over residues 29–39; that stretch reads GSSPDPNPDSS. The span at 49–60 shows a compositional bias: polar residues; it reads AMSQDPGSQDNS. The DNA-binding element occupies 79–182; sequence FRLSFPRKLW…PRLLENIQRK (104 aa). Residues 227–275 are disordered; it reads QGAPSVQGPSGTQSFRRSGMWSKKSATRHPLGNGPPQEPNGPSWEGTSG. The span at 228-242 shows a compositional bias: polar residues; sequence GAPSVQGPSGTQSFR.

This sequence belongs to the HSF family.

It is found in the nucleus. This Homo sapiens (Human) protein is Heat shock transcription factor, X-linked member 3.